The primary structure comprises 123 residues: Putative hypoxanthine phosphoribosyltransferase (123 aa).

In terms of biological role, may play a role in purine salvage. This chain is Putative hypoxanthine phosphoribosyltransferase, found in Methanosarcina mazei (strain ATCC BAA-159 / DSM 3647 / Goe1 / Go1 / JCM 11833 / OCM 88) (Methanosarcina frisia).